The sequence spans 460 residues: Muscarinic acetylcholine receptor M1 (460 aa).

Over 1–22 the chain is Extracellular; sequence MNTSAPPAVSPNITVLAPGKGP. 2 N-linked (GlcNAc...) asparagine glycosylation sites follow: Asn-2 and Asn-12. A helical membrane pass occupies residues 23 to 48; that stretch reads WQVAFIGITTGLLSLATVTGNLLVLI. The Cytoplasmic segment spans residues 49 to 62; that stretch reads SFKVNTELKTVNNY. Residues 63–84 form a helical membrane-spanning segment; that stretch reads FLLSLACADLIIGTFSMNLYTT. At 85-95 the chain is on the extracellular side; it reads YLLMGHWALGT. A helical membrane pass occupies residues 96–121; it reads LACDLWLALDYVASNASVMNLLLISF. Residues Cys-98 and Cys-178 are joined by a disulfide bond. The Cytoplasmic portion of the chain corresponds to 122–142; that stretch reads DRYFSVTRPLSYRAKRTPRRA. Residues 143-164 traverse the membrane as a helical segment; sequence ALMIGLAWLVSFVLWAPAILFW. The Extracellular portion of the chain corresponds to 165 to 185; sequence QYLVGERTVLAGQCYIQFLSQ. The chain crosses the membrane as a helical span at residues 186-209; the sequence is PIITFGTAMAAFYLPVTVMCTLYW. Residues 210-366 lie on the Cytoplasmic side of the membrane; that stretch reads RIYRETENRA…LVKEKKAART (157 aa). Disordered stretches follow at residues 225–256, 274–297, and 310–351; these read LQGS…ETPP, WKEE…EEPG, and EAQA…QLAK. The residue at position 230 (Thr-230) is a Phosphothreonine. Residues 238–247 are compositionally biased toward low complexity; that stretch reads SSSSERSQPG. Residues 328-343 show a composition bias toward basic residues; it reads RPTKKGRDRAGKGQKP. The helical transmembrane segment at 367–390 threads the bilayer; the sequence is LSAILLAFILTWTPYNIMVLVSTF. At 391-397 the chain is on the extracellular side; that stretch reads CKDCVPE. The helical transmembrane segment at 398–420 threads the bilayer; the sequence is TLWELGYWLCYVNSTINPMCYAL. Residues 421 to 460 lie on the Cytoplasmic side of the membrane; the sequence is CNKAFRDTFRLLLLCRWDKRRWRKIPKRPGSVHRTPSRQC. Phosphothreonine is present on Thr-428. Ser-451 carries the post-translational modification Phosphoserine. At Thr-455 the chain carries Phosphothreonine. Position 457 is a phosphoserine (Ser-457).

This sequence belongs to the G-protein coupled receptor 1 family. Muscarinic acetylcholine receptor subfamily. CHRM1 sub-subfamily. As to quaternary structure, interacts with GPRASP2. Interacts with TMEM147.

It is found in the cell membrane. It localises to the postsynaptic cell membrane. The muscarinic acetylcholine receptor mediates various cellular responses, including inhibition of adenylate cyclase, breakdown of phosphoinositides and modulation of potassium channels through the action of G proteins. Primary transducing effect is Pi turnover. The polypeptide is Muscarinic acetylcholine receptor M1 (CHRM1) (Homo sapiens (Human)).